Here is a 621-residue protein sequence, read N- to C-terminus: UvrABC system protein C (621 aa).

A GIY-YIG domain is found at 20 to 98 (TAPGVYRMYA…IKSLTPRYNV (79 aa)). One can recognise a UVR domain in the interval 207–242 (DLLAEELIQAMQVASEHLEFEQAARLRDLLTSLRSM).

The protein belongs to the UvrC family. As to quaternary structure, interacts with UvrB in an incision complex.

The protein resides in the cytoplasm. Functionally, the UvrABC repair system catalyzes the recognition and processing of DNA lesions. UvrC both incises the 5' and 3' sides of the lesion. The N-terminal half is responsible for the 3' incision and the C-terminal half is responsible for the 5' incision. The protein is UvrABC system protein C of Xylella fastidiosa (strain M23).